We begin with the raw amino-acid sequence, 301 residues long: Zinc finger protein 346 (301 aa).

2 consecutive Matrin-type zinc fingers follow at residues 55-85 (SQCK…KVRR) and 117-141 (KACS…GKVH). Positions 57, 60, 73, 79, 119, 122, 135, and 141 each coordinate Zn(2+). Residues 151–177 (GSQTPALPQPEAQAKKDDGMQGPAEQD) are disordered. Matrin-type zinc fingers lie at residues 180 to 210 (RFCS…HMNK) and 230 to 257 (YPCT…HKNH). The tract at residues 250–283 (SGSKHKNHAKPKKGPNAFAPPPDNYQPDYQYPTN) is disordered. Residues 251–262 (GSKHKNHAKPKK) are compositionally biased toward basic residues.

The protein localises to the nucleus. The protein resides in the cytoplasm. Binds preferentially to dsRNA, but also to RNA-DNA hybrids. The sequence is that of Zinc finger protein 346 from Danio rerio (Zebrafish).